Here is a 380-residue protein sequence, read N- to C-terminus: L-prolyl-[peptidyl-carrier protein] dehydrogenase (380 aa).

Glutamate 243 serves as the catalytic Proton acceptor. FAD is bound by residues arginine 269 and glutamine 280.

The protein belongs to the acyl-CoA dehydrogenase family. It depends on FAD as a cofactor.

It catalyses the reaction L-prolyl-[peptidyl-carrier protein] + 2 oxidized [electron-transfer flavoprotein] + H(+) = (1H-pyrrole-2-carbonyl)-[peptidyl-carrier protein] + 2 reduced [electron-transfer flavoprotein]. Its function is as follows. Involved in the biosynthesis of pyoluteorin. Catalyzes the desaturation of the L-prolyl-[PltL] to yield 1H-pyrrole-2-carbonyl-[PltL]. This chain is L-prolyl-[peptidyl-carrier protein] dehydrogenase, found in Pseudomonas fluorescens (strain ATCC BAA-477 / NRRL B-23932 / Pf-5).